A 544-amino-acid chain; its full sequence is BTB/POZ domain-containing protein At2g13690 (544 aa).

Disordered stretches follow at residues Ala-34–Ser-66 and Leu-82–Asp-111. The segment covering Asp-37–Arg-55 has biased composition (polar residues). The segment covering Asp-93 to Glu-103 has biased composition (low complexity). The 84-residue stretch at Tyr-142–Lys-225 folds into the BTB domain.

Its pathway is protein modification; protein ubiquitination. May act as a substrate-specific adapter of an E3 ubiquitin-protein ligase complex (CUL3-RBX1-BTB) which mediates the ubiquitination and subsequent proteasomal degradation of target proteins. In Arabidopsis thaliana (Mouse-ear cress), this protein is BTB/POZ domain-containing protein At2g13690 (PRL1-IFG).